Reading from the N-terminus, the 411-residue chain is Carbohydrate sulfotransferase 1 (411 aa).

At 1 to 2 the chain is on the cytoplasmic side; it reads MQ. The helical; Signal-anchor for type II membrane protein transmembrane segment at 3-23 threads the bilayer; the sequence is CSWKAVLLLALASIAIQYTAI. The Lumenal portion of the chain corresponds to 24–411; the sequence is RTFTAKSFHT…VEERDFRPFS (388 aa). N-linked (GlcNAc...) asparagine glycosylation is present at Asn-56. 69–75 serves as a coordination point for 3'-phosphoadenylyl sulfate; the sequence is TRSGSSF. N-linked (GlcNAc...) asparagine glycosylation is found at Asn-145 and Asn-189. 234 to 242 serves as a coordination point for 3'-phosphoadenylyl sulfate; it reads RDPRGILAS. The N-linked (GlcNAc...) asparagine glycan is linked to Asn-334. Positions 337–339 match the Cell attachment site motif; the sequence is RGD.

The protein belongs to the sulfotransferase 1 family. Gal/GlcNAc/GalNAc subfamily. As to expression, widely expressed at low level. Expressed in brain and skeletal muscle. Expressed by high endothelial cells (HEVs) and leukocytes.

The protein resides in the golgi apparatus membrane. The enzyme catalyses 3'-phosphoadenylyl sulfate + keratan = adenosine 3',5'-bisphosphate + keratan 6'-sulfate.. The protein operates within glycan metabolism. In terms of biological role, sulfotransferase that utilizes 3'-phospho-5'-adenylyl sulfate (PAPS) as sulfonate donor to catalyze the transfer of sulfate to position 6 of internal galactose (Gal) residues of keratan. Cooperates with B4GALT4 and B3GNT7 glycosyltransferases and CHST6 sulfotransferase to construct and elongate disulfated disaccharide unit [-&gt;3(6-sulfoGalbeta)1-&gt;4(6-sulfoGlcNAcbeta)1-&gt;] within keratan sulfate polymer. Has a preference for sulfating keratan sulfate, but it also transfers sulfate to the unsulfated polymer. Involved in biosynthesis of phosphacan, a major keratan sulfate proteoglycan in the developing brain. Involved in biosynthesis of 6-sulfoGalbeta-containing O-linked glycans in high endothelial venules of lymph nodes. May act in a synergistic manner with CHST4 to generate sialyl 6',6-disulfo Lewis X motif, a recognition determinant for immune cell receptors implicated in leukocyte trafficking. Catalyzes sulfation of N-acetyllactosamine (LacNAc) oligosaccharides with highest efficiency for sialylated LacNAc structures. This is Carbohydrate sulfotransferase 1 from Homo sapiens (Human).